The following is a 299-amino-acid chain: Probable xyloglucan endotransglucosylase/hydrolase protein 10 (299 aa).

An N-terminal signal peptide occupies residues Met-1–Ala-29. One can recognise a GH16 domain in the interval Ser-30–Phe-225. Asn-51 carries N-linked (GlcNAc...) asparagine glycosylation. Glu-111 functions as the Nucleophile in the catalytic mechanism. Residue Glu-115 is the Proton donor of the active site. Residues Glu-115, Gln-128 to Asn-130, Asn-138 to Glu-140, Ser-204 to Trp-205, and Gly-209 each bind xyloglucan. 2 disulfides stabilise this stretch: Cys-233–Cys-242 and Cys-280–Cys-294. N-linked (GlcNAc...) asparagine glycosylation is present at Asn-238. Arg-285 lines the xyloglucan pocket.

This sequence belongs to the glycosyl hydrolase 16 family. XTH group 1 subfamily. In terms of processing, contains at least one intrachain disulfide bond essential for its enzymatic activity.

It localises to the secreted. It is found in the cell wall. The protein resides in the extracellular space. Its subcellular location is the apoplast. It catalyses the reaction breaks a beta-(1-&gt;4) bond in the backbone of a xyloglucan and transfers the xyloglucanyl segment on to O-4 of the non-reducing terminal glucose residue of an acceptor, which can be a xyloglucan or an oligosaccharide of xyloglucan.. Its function is as follows. Catalyzes xyloglucan endohydrolysis (XEH) and/or endotransglycosylation (XET). Cleaves and religates xyloglucan polymers, an essential constituent of the primary cell wall, and thereby participates in cell wall construction of growing tissues. The sequence is that of Probable xyloglucan endotransglucosylase/hydrolase protein 10 (XTH10) from Arabidopsis thaliana (Mouse-ear cress).